The following is a 107-amino-acid chain: Putative pterin-4-alpha-carbinolamine dehydratase (107 aa).

Belongs to the pterin-4-alpha-carbinolamine dehydratase family.

It carries out the reaction (4aS,6R)-4a-hydroxy-L-erythro-5,6,7,8-tetrahydrobiopterin = (6R)-L-erythro-6,7-dihydrobiopterin + H2O. The protein is Putative pterin-4-alpha-carbinolamine dehydratase of Paracoccus denitrificans (strain Pd 1222).